The primary structure comprises 536 residues: MFEIFKKPLSRIVGATFAFAGVTLLACAMENGVAMAEGPTFQDVASQVFGQPVGPDNDGTLYIFGLTAKYTEPEYVDGRGPYKSFLKMLPSIRWYDPEHYWTNGSQTEGVFKNEECVLCHTVQTPTIVNDWKQSSHGSKDIRRGIGIKKDGKPVEDLVGCADCHGNNHQKLEMPTYKLCNDCHPKETAEHRAGGLGSHTHAYTVNVLEFSWHVGKPAEEVTGCAHCHAIAENRCSGCHTRHKFDPAEARKPTACRVCHMGIDHDEWAMYNTSIHGALYEAESARMDWGKKLKKGNYRVPTCAYCHMQNGDHNPQRFGTIYSDMGMFQVDRGAPKHKAKRDSWIKLCQDCHSPRFAADKLKEMDAGVNLSFTKWREAAAVIVGCYLDGVVDPMPEGSAPDWYGHYTFSLLPGGDPRFYATSNLERLGLEMICYLTGNVYKAYAHMSMYNQTYGNGSAFEQDRKLVEIKTEAAKLRRFAAIEKKIGLEHKSADFWKHGEYLDLLPGWKRKPGDVDVEWFKRTDIPHRANADAGVEIHH.

An N-terminal signal peptide occupies residues 1-26; that stretch reads MFEIFKKPLSRIVGATFAFAGVTLLA. Positions 116, 119, 120, 136, 160, 163, 164, 168, 179, 182, 183, 198, 223, 226, 227, 234, 237, 238, 241, 254, 257, and 258 each coordinate heme c. Histidine 263 serves as a coordination point for hydroxylamine. Residues histidine 274, cysteine 301, cysteine 304, histidine 305, histidine 311, cysteine 346, cysteine 349, histidine 350, histidine 443, and tyrosine 451 each coordinate heme c.

As to quaternary structure, homotrimer; subunits are linked by two covalent bonds between Tyr-451 of one subunit and heme P460 of an adjacent subunit. It depends on heme c as a cofactor.

The protein localises to the anammoxosome. It catalyses the reaction hydroxylamine + 3 Fe(III)-[cytochrome c] = nitric oxide + 3 Fe(II)-[cytochrome c] + 3 H(+). In terms of biological role, catalyzes the oxidation of hydroxylamine to nitric oxide with cytochrome c acting as an electron acceptor. Does not oxidize hydroxylamine to nitrite. Also able to catalyze the four-electron oxidation of hydrazine to N(2) in vitro with reduced efficiency; however, this reaction is probably not physiological. In Kuenenia stuttgartiensis, this protein is Hydroxylamine oxidoreductase.